The chain runs to 31 residues: Putative translational regulatory protein ArgL (31 aa).

In terms of biological role, may serve a regulatory role in expression of downstream gene argF; in an argL-argF-lacZ fusion mutation of the start codon to a stop codon in argL increases expression of beta-galactosidase. The polypeptide is Putative translational regulatory protein ArgL (Escherichia coli (strain K12)).